The following is a 432-amino-acid chain: Enolase (432 aa).

Q167 contributes to the (2R)-2-phosphoglycerate binding site. E209 (proton donor) is an active-site residue. D246, E291, and D318 together coordinate Mg(2+). (2R)-2-phosphoglycerate contacts are provided by K343, R372, S373, and K394. The active-site Proton acceptor is the K343.

This sequence belongs to the enolase family. Component of the RNA degradosome, a multiprotein complex involved in RNA processing and mRNA degradation. It depends on Mg(2+) as a cofactor.

The protein localises to the cytoplasm. It is found in the secreted. The protein resides in the cell surface. The enzyme catalyses (2R)-2-phosphoglycerate = phosphoenolpyruvate + H2O. It functions in the pathway carbohydrate degradation; glycolysis; pyruvate from D-glyceraldehyde 3-phosphate: step 4/5. Its function is as follows. Catalyzes the reversible conversion of 2-phosphoglycerate (2-PG) into phosphoenolpyruvate (PEP). It is essential for the degradation of carbohydrates via glycolysis. This is Enolase from Buchnera aphidicola subsp. Cinara cedri (strain Cc).